The primary structure comprises 335 residues: Large ribosomal subunit protein uL10 (335 aa).

Residues 304–335 (GAAAPVEEAPVEEKKEEKKEEAAAPAGLGMLF) form a disordered region. A compositionally biased stretch (basic and acidic residues) spans 314–325 (VEEKKEEKKEEA).

This sequence belongs to the universal ribosomal protein uL10 family. As to quaternary structure, part of the 50S ribosomal subunit. Homodimer, it forms part of the ribosomal stalk which helps the ribosome interact with GTP-bound translation factors. Forms both a pentameric L10(L12)2(L12)2 and heptameric L10(L12)2(L12)2(L12)2 complex, where L10 forms an elongated spine to which the L12 dimers bind in a sequential fashion. The proportion of heptameric complexes increases during cell growth.

Functionally, forms part of the ribosomal stalk, playing a central role in the interaction of the ribosome with GTP-bound translation factors. In Methanococcus maripaludis (strain DSM 14266 / JCM 13030 / NBRC 101832 / S2 / LL), this protein is Large ribosomal subunit protein uL10.